The following is a 309-amino-acid chain: Probable manganese-dependent inorganic pyrophosphatase (309 aa).

Mn(2+) is bound by residues His-9, Asp-13, Asp-15, Asp-75, His-97, and Asp-149.

It belongs to the PPase class C family. Requires Mn(2+) as cofactor.

It localises to the cytoplasm. The enzyme catalyses diphosphate + H2O = 2 phosphate + H(+). The chain is Probable manganese-dependent inorganic pyrophosphatase from Bacillus cereus (strain ATCC 10987 / NRS 248).